A 129-amino-acid polypeptide reads, in one-letter code: Serum amyloid A-2 protein (129 aa).

Residues 1–18 (MKLFTGLIFCSLVLGVHS) form the signal peptide. Glutamine 19 is modified (pyrrolidone carboxylic acid). Over residues 90–103 (KHGDSGHGVEDSRA) the composition is skewed to basic and acidic residues. The segment at 90–129 (KHGDSGHGVEDSRADQAANEWGRSGKDPNHFRPPGLPDKY) is disordered.

The protein belongs to the SAA family. In terms of assembly, apolipoprotein of the HDL complex.

The protein localises to the secreted. In terms of biological role, major acute phase reactant. This is Serum amyloid A-2 protein from Sus scrofa (Pig).